We begin with the raw amino-acid sequence, 108 residues long: Large ribosomal subunit protein uL24 (108 aa).

It belongs to the universal ribosomal protein uL24 family. Part of the 50S ribosomal subunit.

Functionally, one of two assembly initiator proteins, it binds directly to the 5'-end of the 23S rRNA, where it nucleates assembly of the 50S subunit. In terms of biological role, one of the proteins that surrounds the polypeptide exit tunnel on the outside of the subunit. The sequence is that of Large ribosomal subunit protein uL24 from Mycoplasma genitalium (strain ATCC 33530 / DSM 19775 / NCTC 10195 / G37) (Mycoplasmoides genitalium).